A 374-amino-acid polypeptide reads, in one-letter code: tRNA-specific 2-thiouridylase MnmA (374 aa).

ATP contacts are provided by residues 10–17 and Leu36; that span reads AMSGGVDS. Cys111 (nucleophile) is an active-site residue. Cys111 and Cys209 are disulfide-bonded. Residue Gly135 coordinates ATP. The segment at 159–161 is interaction with tRNA; sequence KDQ. Residue Cys209 is the Cysteine persulfide intermediate of the active site.

The protein belongs to the MnmA/TRMU family.

The protein resides in the cytoplasm. The catalysed reaction is S-sulfanyl-L-cysteinyl-[protein] + uridine(34) in tRNA + AH2 + ATP = 2-thiouridine(34) in tRNA + L-cysteinyl-[protein] + A + AMP + diphosphate + H(+). Functionally, catalyzes the 2-thiolation of uridine at the wobble position (U34) of tRNA, leading to the formation of s(2)U34. In Acidobacterium capsulatum (strain ATCC 51196 / DSM 11244 / BCRC 80197 / JCM 7670 / NBRC 15755 / NCIMB 13165 / 161), this protein is tRNA-specific 2-thiouridylase MnmA.